The sequence spans 373 residues: tRNA-specific 2-thiouridylase MnmA (373 aa).

Residues 12 to 19 (GMSGGVDS) and Met-38 each bind ATP. Residues 98-100 (NPD) form an interaction with target base in tRNA region. Catalysis depends on Cys-103, which acts as the Nucleophile. The cysteines at positions 103 and 200 are disulfide-linked. Gly-127 contacts ATP. An interaction with tRNA region spans residues 150 to 152 (KDQ). Cys-200 acts as the Cysteine persulfide intermediate in catalysis. Residues 312–313 (RY) are interaction with tRNA.

This sequence belongs to the MnmA/TRMU family.

It is found in the cytoplasm. The catalysed reaction is S-sulfanyl-L-cysteinyl-[protein] + uridine(34) in tRNA + AH2 + ATP = 2-thiouridine(34) in tRNA + L-cysteinyl-[protein] + A + AMP + diphosphate + H(+). Its function is as follows. Catalyzes the 2-thiolation of uridine at the wobble position (U34) of tRNA, leading to the formation of s(2)U34. This chain is tRNA-specific 2-thiouridylase MnmA, found in Streptococcus pneumoniae (strain 70585).